We begin with the raw amino-acid sequence, 115 residues long: uncharacterized protein (115 aa).

The MSP domain occupies 1–115; it reads MGVEISLDPP…ETVIKLSAAE (115 aa).

This is an uncharacterized protein from Caenorhabditis elegans.